A 333-amino-acid polypeptide reads, in one-letter code: 4-hydroxy-3-methylbut-2-enyl diphosphate reductase (333 aa).

C33 contributes to the [4Fe-4S] cluster binding site. Residues H62 and H95 each coordinate (2E)-4-hydroxy-3-methylbut-2-enyl diphosphate. Dimethylallyl diphosphate contacts are provided by H62 and H95. Residues H62 and H95 each coordinate isopentenyl diphosphate. C117 contributes to the [4Fe-4S] cluster binding site. H145 provides a ligand contact to (2E)-4-hydroxy-3-methylbut-2-enyl diphosphate. Residue H145 coordinates dimethylallyl diphosphate. An isopentenyl diphosphate-binding site is contributed by H145. E147 (proton donor) is an active-site residue. (2E)-4-hydroxy-3-methylbut-2-enyl diphosphate is bound at residue T186. C216 is a binding site for [4Fe-4S] cluster. (2E)-4-hydroxy-3-methylbut-2-enyl diphosphate-binding residues include S244, S245, N246, and S289. S244, S245, N246, and S289 together coordinate dimethylallyl diphosphate. Isopentenyl diphosphate contacts are provided by S244, S245, N246, and S289.

Belongs to the IspH family. [4Fe-4S] cluster is required as a cofactor.

The enzyme catalyses isopentenyl diphosphate + 2 oxidized [2Fe-2S]-[ferredoxin] + H2O = (2E)-4-hydroxy-3-methylbut-2-enyl diphosphate + 2 reduced [2Fe-2S]-[ferredoxin] + 2 H(+). It carries out the reaction dimethylallyl diphosphate + 2 oxidized [2Fe-2S]-[ferredoxin] + H2O = (2E)-4-hydroxy-3-methylbut-2-enyl diphosphate + 2 reduced [2Fe-2S]-[ferredoxin] + 2 H(+). It functions in the pathway isoprenoid biosynthesis; dimethylallyl diphosphate biosynthesis; dimethylallyl diphosphate from (2E)-4-hydroxy-3-methylbutenyl diphosphate: step 1/1. Its pathway is isoprenoid biosynthesis; isopentenyl diphosphate biosynthesis via DXP pathway; isopentenyl diphosphate from 1-deoxy-D-xylulose 5-phosphate: step 6/6. Its function is as follows. Catalyzes the conversion of 1-hydroxy-2-methyl-2-(E)-butenyl 4-diphosphate (HMBPP) into a mixture of isopentenyl diphosphate (IPP) and dimethylallyl diphosphate (DMAPP). Acts in the terminal step of the DOXP/MEP pathway for isoprenoid precursor biosynthesis. In Corynebacterium diphtheriae (strain ATCC 700971 / NCTC 13129 / Biotype gravis), this protein is 4-hydroxy-3-methylbut-2-enyl diphosphate reductase.